The following is a 423-amino-acid chain: Carboxypeptidase B2 (423 aa).

A signal peptide spans 1 to 22 (MKLYSLGVLVATVLFCGEHAFA). Positions 23 to 114 (FQRGQVLSAL…QTSNDTISPR (92 aa)) are cleaved as a propeptide — activation peptide. Residues Asn44, Asn73, Asn85, and Asn108 are each glycosylated (N-linked (GlcNAc...) asparagine). A Peptidase M14 domain is found at 122–419 (QYHSLNEIYS…VAVAKIASHV (298 aa)). A disulfide bridge links Cys178 with Cys191. Residues His181 and Glu184 each coordinate Zn(2+). Residues 181 to 184 (HARE) and Arg239 contribute to the substrate site. The N-linked (GlcNAc...) asparagine glycan is linked to Asn241. 2 disulfides stabilise this stretch: Cys250-Cys274 and Cys265-Cys279. 256–257 (NR) contacts substrate. His310 lines the Zn(2+) pocket. Substrate is bound by residues 311–312 (SY) and Tyr363. Glu385 serves as the catalytic Proton donor/acceptor.

The protein belongs to the peptidase M14 family. Zn(2+) is required as a cofactor.

It is found in the secreted. It carries out the reaction Release of C-terminal Arg and Lys from a polypeptide.. With respect to regulation, TAFI/CPB2 is unique among carboxypeptidases in that it spontaneously inactivates with a short half-life, a property that is crucial for its role in controlling blood clot lysis. The zymogen is stabilized by interactions with the activation peptide. Release of the activation peptide increases a dynamic flap mobility and in time this leads to conformational changes that disrupt the catalytic site and expose a cryptic thrombin-cleavage site present at Arg-324. In terms of biological role, cleaves C-terminal arginine or lysine residues from biologically active peptides such as kinins or anaphylatoxins in the circulation thereby regulating their activities. Down-regulates fibrinolysis by removing C-terminal lysine residues from fibrin that has already been partially degraded by plasmin. In Bos taurus (Bovine), this protein is Carboxypeptidase B2 (CPB2).